A 469-amino-acid polypeptide reads, in one-letter code: 3-isopropylmalate dehydratase large subunit (469 aa).

The [4Fe-4S] cluster site is built by C350, C410, and C413.

The protein belongs to the aconitase/IPM isomerase family. LeuC type 1 subfamily. Heterodimer of LeuC and LeuD. Requires [4Fe-4S] cluster as cofactor.

The enzyme catalyses (2R,3S)-3-isopropylmalate = (2S)-2-isopropylmalate. It participates in amino-acid biosynthesis; L-leucine biosynthesis; L-leucine from 3-methyl-2-oxobutanoate: step 2/4. Catalyzes the isomerization between 2-isopropylmalate and 3-isopropylmalate, via the formation of 2-isopropylmaleate. The sequence is that of 3-isopropylmalate dehydratase large subunit from Chelativorans sp. (strain BNC1).